We begin with the raw amino-acid sequence, 230 residues long: Sugar fermentation stimulation protein homolog (230 aa).

Belongs to the SfsA family.

This is Sugar fermentation stimulation protein homolog from Clostridium botulinum (strain Loch Maree / Type A3).